A 236-amino-acid chain; its full sequence is Methylosome subunit pICln (236 aa).

At Ser-2 the chain carries N-acetylserine. The interval Glu-88 to Ser-109 is disordered. Phosphoserine is present on residues Ser-95, Ser-143, Ser-192, Ser-194, Ser-197, and Ser-209. The segment covering Ser-95 to Pro-107 has biased composition (acidic residues). Thr-222 bears the Phosphothreonine mark.

This sequence belongs to the pICln (TC 1.A.47) family. As to quaternary structure, component of the methylosome, a 20S complex containing at least PRMT5/SKB1, WDR77/MEP50 and CLNS1A/pICln. May mediate SNRPD1 and SNRPD3 methylation. Forms a 6S pICln-Sm complex composed of CLNS1A/pICln, SNRPD1, SNRPD2, SNRPE, SNRPF and SNRPG; ring-like structure where CLNS1A/pICln mimics additional Sm proteins and which is unable to assemble into the core snRNP. Interacts with LSM10 and LSM11.

Its subcellular location is the cytoplasm. The protein localises to the cytosol. It localises to the nucleus. The protein resides in the cytoskeleton. Functionally, involved in both the assembly of spliceosomal snRNPs and the methylation of Sm proteins. Chaperone that regulates the assembly of spliceosomal U1, U2, U4 and U5 small nuclear ribonucleoproteins (snRNPs), the building blocks of the spliceosome, and thereby plays an important role in the splicing of cellular pre-mRNAs. Most spliceosomal snRNPs contain a common set of Sm proteins SNRPB, SNRPD1, SNRPD2, SNRPD3, SNRPE, SNRPF and SNRPG that assemble in a heptameric protein ring on the Sm site of the small nuclear RNA to form the core snRNP (Sm core). In the cytosol, the Sm proteins SNRPD1, SNRPD2, SNRPE, SNRPF and SNRPG are trapped in an inactive 6S pICln-Sm complex by the chaperone CLNS1A that controls the assembly of the core snRNP. Dissociation by the SMN complex of CLNS1A from the trapped Sm proteins and their transfer to an SMN-Sm complex triggers the assembly of core snRNPs and their transport to the nucleus. The protein is Methylosome subunit pICln (Clns1a) of Mus musculus (Mouse).